The chain runs to 121 residues: MARIAGVDIPNDKRVVISLTYVYGIGLATSKKILAAAGISEDIRVKDLTSDQEDAIRREVDAIKVEGDLRREVNMNIKRLMEIGSYRGIRHRRGLPVRGQNTKNNARTRKGKAVAIAGKKK.

Residues 96-121 are disordered; that stretch reads PVRGQNTKNNARTRKGKAVAIAGKKK. Residues 106–121 show a composition bias toward basic residues; sequence ARTRKGKAVAIAGKKK.

This sequence belongs to the universal ribosomal protein uS13 family. Part of the 30S ribosomal subunit. Forms a loose heterodimer with protein S19. Forms two bridges to the 50S subunit in the 70S ribosome.

Functionally, located at the top of the head of the 30S subunit, it contacts several helices of the 16S rRNA. In the 70S ribosome it contacts the 23S rRNA (bridge B1a) and protein L5 of the 50S subunit (bridge B1b), connecting the 2 subunits; these bridges are implicated in subunit movement. Contacts the tRNAs in the A and P-sites. This Streptococcus pyogenes serotype M3 (strain SSI-1) protein is Small ribosomal subunit protein uS13.